Here is a 115-residue protein sequence, read N- to C-terminus: MNFVLILMTNTLLALLLMIITFWLPQLNSYMEKSNPYECGFDPMSPARVPFSMKFFLVAITFLLFDLEIALLLPLPWALQTANLPLMVMSSLLLITILALSLAYEWLQKGLDWAE.

The next 3 membrane-spanning stretches (helical) occupy residues 3-23 (FVLI…ITFW), 55-75 (FFLV…LLPL), and 84-104 (LPLM…SLAY).

Belongs to the complex I subunit 3 family. In terms of assembly, core subunit of respiratory chain NADH dehydrogenase (Complex I) which is composed of 45 different subunits. Interacts with TMEM186. Interacts with TMEM242.

Its subcellular location is the mitochondrion inner membrane. The enzyme catalyses a ubiquinone + NADH + 5 H(+)(in) = a ubiquinol + NAD(+) + 4 H(+)(out). Core subunit of the mitochondrial membrane respiratory chain NADH dehydrogenase (Complex I) which catalyzes electron transfer from NADH through the respiratory chain, using ubiquinone as an electron acceptor. Essential for the catalytic activity of complex I. The chain is NADH-ubiquinone oxidoreductase chain 3 from Pan paniscus (Pygmy chimpanzee).